A 774-amino-acid polypeptide reads, in one-letter code: Probable E3 ubiquitin-protein ligase HECTD2 (774 aa).

Residues 1-51 are disordered; the sequence is MSEAARDLSPGAPPAVAAAAPEERKGKEPEREKLPPIVTAGAAAGLDRGSK. Ser-9 is subject to Phosphoserine. Basic and acidic residues predominate over residues 21-34; sequence PEERKGKEPEREKL. An HECT domain is found at 435–774; the sequence is KRADLKKKLK…ISNSEGFGLE (340 aa). Cys-742 (glycyl thioester intermediate) is an active-site residue.

The catalysed reaction is S-ubiquitinyl-[E2 ubiquitin-conjugating enzyme]-L-cysteine + [acceptor protein]-L-lysine = [E2 ubiquitin-conjugating enzyme]-L-cysteine + N(6)-ubiquitinyl-[acceptor protein]-L-lysine.. It functions in the pathway protein modification; protein ubiquitination. E3 ubiquitin-protein ligase which accepts ubiquitin from an E2 ubiquitin-conjugating enzyme in the form of a thioester and then directly transfers the ubiquitin to targeted substrates. This Mus musculus (Mouse) protein is Probable E3 ubiquitin-protein ligase HECTD2 (Hectd2).